The primary structure comprises 156 residues: Hemerythrin-like protein (156 aa).

Positions 54, 84, 88, 109, 113, 142, and 147 each coordinate Fe cation.

This sequence belongs to the hemerythrin family.

Oxygen-binding protein. The oxygen-binding site contains two iron atoms. This is Hemerythrin-like protein from Nematostella vectensis (Starlet sea anemone).